The sequence spans 205 residues: Molybdenum cofactor guanylyltransferase (205 aa).

Residues 14-16 (LAG), Lys27, Asp77, and Asp107 each bind GTP. Mg(2+) is bound at residue Asp107.

This sequence belongs to the MobA family. Monomer. The cofactor is Mg(2+).

It is found in the cytoplasm. It carries out the reaction Mo-molybdopterin + GTP + H(+) = Mo-molybdopterin guanine dinucleotide + diphosphate. Transfers a GMP moiety from GTP to Mo-molybdopterin (Mo-MPT) cofactor (Moco or molybdenum cofactor) to form Mo-molybdopterin guanine dinucleotide (Mo-MGD) cofactor. The chain is Molybdenum cofactor guanylyltransferase from Burkholderia cenocepacia (strain HI2424).